The chain runs to 722 residues: Dipeptidyl aminopeptidase BII (722 aa).

Residues Met-1–Ala-24 form the signal peptide. 2 cysteine pairs are disulfide-bonded: Cys-70-Cys-87 and Cys-166-Cys-174. His-86 (charge relay system) is an active-site residue. Asn-215 to Trp-216 lines the substrate pocket. The Charge relay system role is filled by Asp-224. Residues Asn-330, Gly-655 to Ser-657, and Phe-673 to Asp-674 contribute to the substrate site. Residue Ser-657 is the Charge relay system of the active site.

It belongs to the peptidase S46 family. In terms of assembly, homodimer.

Completely inhibited by the serine protease inhibitor diisopropyl fluorophosphate (DFP) and potently inhibited by 0.5 mM ZnCl(2), 10 mM o-phenanthlorine, phenylmethanesulfonyl fluoride (PMSF) and N-tosyl-L-phenyl-alanyl chloromethyl ketone (TPCK), but not by N-tosyl-L-lysyl chloromethyl ketone (TLCK). Activity is not affected significantly by protease inhibitors, such as chymostatin, leupeptin, N-ethylmaleimide (NEM), iodoacetate (IAA), L-trans-epoxysuccinyl-leucylamido(4-guanido)butane (E64) and pepstatin A or by CoCl(2), CaCl(2) and EDTA. Exopeptidase that catalyzes the removal of dipeptide units (NH2-P2-P1-) from the free amino termini of oligopeptides and small proteins. Peptide digestion is sequential and substrate recognition is non-specific, with the exception that Pro is not suitable as a P1 residue. Removes many residues of bioactive oligopeptides such as angiotensin I and neuromedin N and also cleaves oxidized insulin B chain. Able to hydrolyze an X-Pro bond, an imido bond. No endopeptidase activity. May play a physiological role in feeding. This Pseudoxanthomonas mexicana protein is Dipeptidyl aminopeptidase BII.